A 309-amino-acid polypeptide reads, in one-letter code: Intron-encoded DNA endonuclease ai2a (309 aa).

This sequence belongs to the LAGLIDADG endonuclease family.

It is found in the mitochondrion. Its function is as follows. Mitochondrial DNA endonuclease involved in intron homing. Cleaves only one strand of intronless DNA sequence at the site which coincides with the I-SceII cleavage recognition site. The protein is Intron-encoded DNA endonuclease ai2a (ai2a) of Dictyostelium discoideum (Social amoeba).